The primary structure comprises 370 residues: Actin-related protein 2/3 complex subunit 1A (370 aa).

WD repeat units follow at residues 6–45 (FLLEPITCHAWNRDRTQIALSPNNHEVHIYKKNGGQWVKA), 50–89 (EHNGHITGIDWAPKSDRIVTCGADRNAYVWSQKDGVWKPT), 140–179 (PIRSTVLSLDWHPNNVLLAAGSCDFKCRVFSAYIKEVDEK), 202–241 (GTGGWVHGVSFSASGSRLAWVSHDSTVSVADASKSVQVST), 244–284 (TEFL…TFVS), and 322–365 (LHQN…SSIQ).

It belongs to the WD repeat ARPC1 family. In terms of assembly, probable component of the Arp2/3 complex in which it may replace ARPC1B.

The protein localises to the cytoplasm. Its subcellular location is the cytoskeleton. It localises to the nucleus. Probably functions as a component of the Arp2/3 complex which is involved in regulation of actin polymerization and together with an activating nucleation-promoting factor (NPF) mediates the formation of branched actin networks. In addition to its role in the cytoplasmic cytoskeleton, the Arp2/3 complex also promotes actin polymerization in the nucleus, thereby regulating gene transcription and repair of damaged DNA. This is Actin-related protein 2/3 complex subunit 1A (ARPC1A) from Bos taurus (Bovine).